Reading from the N-terminus, the 307-residue chain is Protein ORANGE, chloroplastic (307 aa).

A chloroplast-targeting transit peptide spans 1 to 55; it reads MSSLGRILSVSYPPDPYTWRFSQYKLSSSLGRNRRLRWRFTALDPESSSLDSESS. Residue Lys-58 forms a Glycyl lysine isopeptide (Lys-Gly) (interchain with G-Cter in ubiquitin) linkage. A run of 2 helical transmembrane segments spans residues 146 to 166 and 199 to 219; these read VYYA…GLLA and IVAS…VVEV. Positions 208 to 299 are CR-type-like; it reads VGVISALMVV…CTGMAMASEH (92 aa). A CXXCXGXG motif repeat occupies 230–237; sequence CKYCLGTG. One copy of the CXXCXXXG motif repeat lies at 241-248; it reads CARCSSTG. One copy of the CXXCXGXG motif repeat lies at 274 to 281; the sequence is CSNCSGAG. Residues 285–292 form a CXXCXXXG motif repeat; sequence CPTCLCTG.

It belongs to the orange-like family. In terms of assembly, interacts with the phytoene synthase PSY1 in chloroplast. Binds to the eukaryotic release factor eRF1-2. Interacts with the transcription factor TCP14 in the nucleus to repress chloroplast biogenesis in etiolated seedlings. Associates to the E2 ubiquitin-conjugating enzyme UBC19. Ubiquitination at K-58 by UBC19 is essential for nuclear localization.

It is found in the plastid. The protein resides in the chloroplast membrane. Its subcellular location is the nucleus. It localises to the cytoplasm. Functionally, involved in chromoplast differentiation. Associated with a cellular process that triggers the differentiation of pro-plastids or other non-colored plastids into chromoplasts for carotenoid accumulation. Is associated with carotenoid accumulation in chromoplasts. Functions as a major regulator of the phytoene synthase PSY1 protein level and activity. Modulates carotenoid biosynthesis by means of post-transcriptional regulation of PSY1. Modulates carotenoid biosynthesis in part by up-regulating a series of endogenous carotenogenic genes. Regulates cell elongation in the petiole in an eRF1-2-dependent manner. Binds to and represses TCP14 transactivation activity, thus preventing early light-induced proteins (ELIPs, e.g. ELIP1 and ELIP2) expression and delaying chloroplast biogenesis (e.g. lower chlorophyll biosynthesis and slower development of thylakoid membranes) in germinating cotyledons and etiolated seedlings; reduced levels upon illumination combined to TCP14 accumulation derepress chloroplast biogenesis during deetiolation. In Arabidopsis thaliana (Mouse-ear cress), this protein is Protein ORANGE, chloroplastic.